Reading from the N-terminus, the 362-residue chain is MAQHDPIGLIAPNAGLAQLNERSREIFRQIVESYLATGEPVGSRNISRLISVPLSPASVRNVMADLEQLGLIYAPHTSAGRLPTELGLRFFVDALMQIGDLTEPERQSIQAQLSSVGRAHTVEAALGEALTRLSGLTRAAAVVLTAKANVRLKHIEFVRLEPERALVILVAEDGQVENRVLTLPPGVPSSALIEAANYLNARIRGRTLAEARLELESLMVQNKAELDQLTQKVIAAGIASWSGGDGEDRQLIVRGHANLLEDLHALDDLERVRLLFDDLETKRGVIDLLGRAESADGVRIFIGSENKLFSLSGSSTIIAPYSDGAGHIVGVLGVIGPTRLNYARVIPMVDYTARIVSRMLGG.

This sequence belongs to the HrcA family.

Its function is as follows. Negative regulator of class I heat shock genes (grpE-dnaK-dnaJ and groELS operons). Prevents heat-shock induction of these operons. In Rhodopseudomonas palustris (strain ATCC BAA-98 / CGA009), this protein is Heat-inducible transcription repressor HrcA.